A 342-amino-acid polypeptide reads, in one-letter code: Guanine nucleotide-binding protein alpha-9 subunit (342 aa).

Residue Gly-2 is the site of N-myristoyl glycine attachment. Cys-3 carries S-palmitoyl cysteine lipidation. Residues 28–342 (REIKLLLLGS…IIQSILKLHY (315 aa)) enclose the G-alpha domain. The tract at residues 31–44 (KLLLLGSGDSGKST) is G1 motif. GTP-binding positions include 36 to 43 (GSGDSGKS), 167 to 173 (LRCRQRT), 192 to 196 (DVGGQ), 261 to 264 (NKND), and Ala-316. Mg(2+)-binding residues include Ser-43 and Thr-173. The interval 165–173 (DVLRCRQRT) is G2 motif. The interval 188–197 (FRLIDVGGQK) is G3 motif. The tract at residues 257 to 264 (VLFLNKND) is G4 motif. Positions 314 to 319 (TTATDT) are G5 motif.

This sequence belongs to the G-alpha family. G proteins are composed of 3 units; alpha, beta and gamma. The alpha chain contains the guanine nucleotide binding site.

Functionally, guanine nucleotide-binding proteins (G proteins) are involved as modulators or transducers in various transmembrane signaling systems. G alpha-9 antagonizes broad chemotactic response. It functions rapidly following receptor stimulation to negatively regulate PI3K/PTEN, adenylyl cyclase, and guanylyl cyclase pathways. The polypeptide is Guanine nucleotide-binding protein alpha-9 subunit (gpaI) (Dictyostelium discoideum (Social amoeba)).